Consider the following 359-residue polypeptide: Heat-inducible transcription repressor HrcA (359 aa).

Belongs to the HrcA family.

Functionally, negative regulator of class I heat shock genes (grpE-dnaK-dnaJ and groELS operons). Prevents heat-shock induction of these operons. The sequence is that of Heat-inducible transcription repressor HrcA from Roseiflexus sp. (strain RS-1).